The primary structure comprises 490 residues: Velvet complex subunit 2 (490 aa).

2 disordered regions span residues 23-148 (LYHH…ESQQ) and 295-316 (YQTQ…TYGP). Residues 54-70 (PPSHHFQLHPGHGHHQQ) show a composition bias toward basic residues. The segment covering 112–131 (AAEHRDHPQHALDEPSRSHD) has biased composition (basic and acidic residues). Positions 164–474 (ATGRRYHLDV…AAQGIKIPIR (311 aa)) constitute a Velvet domain. The span at 295–313 (YQTQPTYSQGSSAYPSNGT) shows a compositional bias: polar residues.

This sequence belongs to the velvet family. VelB subfamily. In terms of assembly, component of the heterotrimeric velvet complex composed of LAE1, VEL1 and VEL2; VEL1 acting as a bridging protein between LAE1 and VEL2. Forms a heterodimeric complex with VOS1; the formation of the VEL2-VOS1 complex is light-dependent.

The protein localises to the nucleus. The protein resides in the cytoplasm. Its function is as follows. Component of the velvet transcription factor complex that controls sexual/asexual developmental ratio in response to light, promoting sexual development in the darkness while stimulating asexual sporulation under illumination. The velvet complex acts as a global regulator for secondary metabolite gene expression. Component of the VEL2-VOS1 heterodimeric complex that plays a dual role in activating genes associated with spore maturation and repressing certain development-associated genes. The VEL2-VOS1 complex binds DNA through the DNA-binding domain of VOS1 that recognizes an 11-nucleotide consensus sequence 5'-CTGGCCGCGGC-3' consisting of two motifs in the promoters of key developmental regulatory genes. Regulates expression of cellulase-encoding genes such as the cellobiohydrolase-encoding genes cbh1 and cbh2, the endo-beta-1,4-glucanase-encoding genes egl1 and egl2, and the beta-glucosidase-encoding gene bgl1. This Hypocrea jecorina (strain QM6a) (Trichoderma reesei) protein is Velvet complex subunit 2.